The primary structure comprises 142 residues: Large ribosomal subunit protein uL13 (142 aa).

This sequence belongs to the universal ribosomal protein uL13 family. Part of the 50S ribosomal subunit.

This protein is one of the early assembly proteins of the 50S ribosomal subunit, although it is not seen to bind rRNA by itself. It is important during the early stages of 50S assembly. The chain is Large ribosomal subunit protein uL13 from Psychrobacter cryohalolentis (strain ATCC BAA-1226 / DSM 17306 / VKM B-2378 / K5).